We begin with the raw amino-acid sequence, 344 residues long: Fructose-bisphosphate aldolase (344 aa).

A D-glyceraldehyde 3-phosphate-binding site is contributed by Ser-53. Asp-95 acts as the Proton donor in catalysis. Residues His-96, Asp-131, Glu-161, and His-212 each coordinate Zn(2+). Gly-213 provides a ligand contact to dihydroxyacetone phosphate. His-252 serves as a coordination point for Zn(2+). Dihydroxyacetone phosphate is bound by residues 253-255 (GGS) and 274-277 (NVDT).

Belongs to the class II fructose-bisphosphate aldolase family. Zn(2+) serves as cofactor.

It carries out the reaction beta-D-fructose 1,6-bisphosphate = D-glyceraldehyde 3-phosphate + dihydroxyacetone phosphate. Its pathway is carbohydrate degradation; glycolysis; D-glyceraldehyde 3-phosphate and glycerone phosphate from D-glucose: step 4/4. Catalyzes the aldol condensation of dihydroxyacetone phosphate (DHAP or glycerone-phosphate) with glyceraldehyde 3-phosphate (G3P) to form fructose 1,6-bisphosphate (FBP) in gluconeogenesis and the reverse reaction in glycolysis. The polypeptide is Fructose-bisphosphate aldolase (fba) (Mycobacterium bovis (strain ATCC BAA-935 / AF2122/97)).